A 339-amino-acid chain; its full sequence is Dihydroorotate dehydrogenase (quinone) (339 aa).

FMN-binding positions include 64–68 (AGADK) and T88. A substrate-binding site is contributed by K68. 113 to 117 (NRNGF) is a substrate binding site. N141 and N174 together coordinate FMN. N174 lines the substrate pocket. Residue S177 is the Nucleophile of the active site. Position 179 (N179) interacts with substrate. Positions 219 and 247 each coordinate FMN. 248–249 (NT) is a substrate binding site. FMN-binding positions include G270, G299, and 320-321 (YS).

It belongs to the dihydroorotate dehydrogenase family. Type 2 subfamily. As to quaternary structure, monomer. Requires FMN as cofactor.

It is found in the cell membrane. The enzyme catalyses (S)-dihydroorotate + a quinone = orotate + a quinol. The protein operates within pyrimidine metabolism; UMP biosynthesis via de novo pathway; orotate from (S)-dihydroorotate (quinone route): step 1/1. In terms of biological role, catalyzes the conversion of dihydroorotate to orotate with quinone as electron acceptor. The polypeptide is Dihydroorotate dehydrogenase (quinone) (Haemophilus influenzae (strain PittEE)).